Consider the following 476-residue polypeptide: Retinoic acid receptor gamma (476 aa).

The interval 1-109 (MANSSKERLC…PPPPPRVYKP (109 aa)) is modulating. The segment covering 81–96 (STVETQSTSSEEMVPS) has biased composition (low complexity). A disordered region spans residues 81 to 102 (STVETQSTSSEEMVPSSPSPPP). 2 NR C4-type zinc fingers span residues 110 to 130 (CFVCNDKSSGYHYGVSSCEGC) and 146 to 170 (CHRDKNCQINKVTRNRCQFCRLQKC). The segment at residues 110-175 (CFVCNDKSSG…RLQKCFQVGM (66 aa)) is a DNA-binding region (nuclear receptor). The hinge stretch occupies residues 176–205 (SKEAVRNDRNKKKKEIKEEVVLPDSYEMPP). Residues 184–189 (RNKKKK) carry the Nuclear localization signal motif. One can recognise an NR LBD domain in the interval 206 to 440 (EMEELIQKVS…PLIREMLENP (235 aa)). Residues 435 to 476 (EMLENPEAFEDGAATPKPSERSSSESSNGSPTGEDSSGSKTP) form a disordered region. The segment covering 462–476 (NGSPTGEDSSGSKTP) has biased composition (polar residues).

The protein belongs to the nuclear hormone receptor family. NR1 subfamily. In terms of assembly, heterodimer; with a rxr molecule. Binds DNA preferentially as a rar/rxr heterodimer. As to expression, expressed in embryos, tadpoles and various adult tissue such as kidney, testis, brain, liver, skeletal muscle and spleen.

It localises to the nucleus. Receptor for retinoic acid. Retinoic acid receptors bind as heterodimers to their target response elements in response to their ligands, all-trans or 9-cis retinoic acid, and regulate gene expression in various biological processes. The rar/rxr heterodimers bind to the retinoic acid response elements (RARE) composed of tandem 5'-AGGTCA-3' sites known as DR1-DR5. This Xenopus laevis (African clawed frog) protein is Retinoic acid receptor gamma (rarg).